A 255-amino-acid polypeptide reads, in one-letter code: Acetylglutamate kinase (255 aa).

Residues 40 to 41 (GG), R62, and N153 contribute to the substrate site.

This sequence belongs to the acetylglutamate kinase family. ArgB subfamily.

It is found in the cytoplasm. The enzyme catalyses N-acetyl-L-glutamate + ATP = N-acetyl-L-glutamyl 5-phosphate + ADP. It functions in the pathway amino-acid biosynthesis; L-arginine biosynthesis; N(2)-acetyl-L-ornithine from L-glutamate: step 2/4. Catalyzes the ATP-dependent phosphorylation of N-acetyl-L-glutamate. This is Acetylglutamate kinase from Bacillus anthracis (strain A0248).